A 291-amino-acid chain; its full sequence is NADH-cytochrome b5 reductase 2 (291 aa).

The chain crosses the membrane as a helical span at residues 7 to 23 (PIAATSVVAAAASSYYF). The FAD-binding FR-type domain maps to 41–145 (DQWVDLKLKS…KGPIIKYQWQ (105 aa)). 148–183 (LHKEITLIGAGTGITPLYQLISAINKNPEDKTKVNL) is a binding site for FAD.

Belongs to the flavoprotein pyridine nucleotide cytochrome reductase family. Requires FAD as cofactor.

It is found in the mitochondrion outer membrane. It carries out the reaction 2 Fe(III)-[cytochrome b5] + NADH = 2 Fe(II)-[cytochrome b5] + NAD(+) + H(+). Its function is as follows. May mediate the reduction of outer membrane cytochrome b5. In Yarrowia lipolytica (strain CLIB 122 / E 150) (Yeast), this protein is NADH-cytochrome b5 reductase 2 (MCR1).